We begin with the raw amino-acid sequence, 296 residues long: UDP-N-acetylglucosamine transporter TMEM241 homolog (296 aa).

10 consecutive transmembrane segments (helical) span residues 7-29, 41-61, 67-87, 93-113, 126-146, 147-167, 187-207, 217-237, 248-266, and 272-291; these read AVGLTFCCFYLSSYFTNKYVLSV, WQTLVGGLILHICWKVGWLEI, SDVVLWLPGCALFVGIIYAGS, LPIPVFFTLHNAAEVVSYGFQ, IFSIFLLLLSAGCLPLHDPQF, DADGYFWAVIHLFCVGCYKVF, VFSVVLLGLASHPTGDLISAL, FHSGCCASGILGFLLMLASVK, ASWNFVAKVITAGLSLIYF, and VPLTLCLLAGGLGEAVLVYA.

This sequence belongs to the nucleotide-sugar transporter family. SLC35A subfamily.

The protein resides in the golgi apparatus. Its subcellular location is the cis-Golgi network membrane. Its function is as follows. Golgi-localized UDP-N-acetylglucosamine (UDP-GlcNAc) transporter that transports UDP-N-acetylglucosamine into Golgi lumen. The sequence is that of UDP-N-acetylglucosamine transporter TMEM241 homolog (tmem241) from Xenopus laevis (African clawed frog).